The chain runs to 184 residues: Peptidoglycan-recognition protein SC2 (184 aa).

An N-terminal signal peptide occupies residues 1–20; sequence MANKALILLAVLFCAQAVLG. In terms of domain architecture, N-acetylmuramoyl-L-alanine amidase spans 45 to 169; sequence SYAVIHHTAG…RQVGSTECPG (125 aa). A Zn(2+)-binding site is contributed by histidine 50. Residues cysteine 57 and cysteine 63 are joined by a disulfide bond. Zn(2+)-binding residues include histidine 159 and cysteine 167.

It belongs to the N-acetylmuramoyl-L-alanine amidase 2 family. Zn(2+) serves as cofactor. As to expression, constitutively expressed at high level in gut, in addition to the induced expression in fat body.

It is found in the secreted. The catalysed reaction is Hydrolyzes the link between N-acetylmuramoyl residues and L-amino acid residues in certain cell-wall glycopeptides.. N-acetylmuramyl-L-alanine amidase involved in innate immunity by degrading bacterial peptidoglycans (PGN). Probably plays a scavenger role by digesting biologically active PGN into biologically inactive fragments. Has no direct bacteriolytic activity. In Drosophila melanogaster (Fruit fly), this protein is Peptidoglycan-recognition protein SC2 (PGRP-SC2).